The following is a 323-amino-acid chain: Ribonuclease Z (323 aa).

Positions 62, 64, 66, 67, 140, 211, and 270 each coordinate Zn(2+). Asp-66 serves as the catalytic Proton acceptor.

It belongs to the RNase Z family. Homodimer. Zn(2+) is required as a cofactor.

The enzyme catalyses Endonucleolytic cleavage of RNA, removing extra 3' nucleotides from tRNA precursor, generating 3' termini of tRNAs. A 3'-hydroxy group is left at the tRNA terminus and a 5'-phosphoryl group is left at the trailer molecule.. Zinc phosphodiesterase, which displays some tRNA 3'-processing endonuclease activity. Probably involved in tRNA maturation, by removing a 3'-trailer from precursor tRNA. The chain is Ribonuclease Z from Marinobacter nauticus (strain ATCC 700491 / DSM 11845 / VT8) (Marinobacter aquaeolei).